Here is a 115-residue protein sequence, read N- to C-terminus: NADH-ubiquinone oxidoreductase chain 3 (115 aa).

Helical transmembrane passes span 3-23, 55-75, and 86-106; these read LPLALTTSITLTLLLVTIAFW, FFLVAITFLLFDLEIALLLPL, and LMLTVALVLITILAAGLAYEW.

It belongs to the complex I subunit 3 family. In terms of assembly, core subunit of respiratory chain NADH dehydrogenase (Complex I) which is composed of 45 different subunits. Interacts with TMEM186. Interacts with TMEM242.

Its subcellular location is the mitochondrion inner membrane. It carries out the reaction a ubiquinone + NADH + 5 H(+)(in) = a ubiquinol + NAD(+) + 4 H(+)(out). Its function is as follows. Core subunit of the mitochondrial membrane respiratory chain NADH dehydrogenase (Complex I) which catalyzes electron transfer from NADH through the respiratory chain, using ubiquinone as an electron acceptor. Essential for the catalytic activity of complex I. The chain is NADH-ubiquinone oxidoreductase chain 3 from Lemur catta (Ring-tailed lemur).